A 195-amino-acid chain; its full sequence is Transcriptional regulator LdrP (195 aa).

The region spanning 110-182 (GELRARIARY…YRRVYLLDLA (73 aa)) is the HTH crp-type domain. The H-T-H motif DNA-binding region spans 142–161 (HEEIADATASIRESVSKVLA).

As to quaternary structure, homodimer.

In terms of biological role, activates transcription. Positively regulates PcrtB promoter upstream of the crtB operon in a cAMP-independent manner. Regulated genes include genes encoding DNA photolyase, phytoene synthase and cytochrome P450 monooxygenase, which are involved in carotenoid biosynthesis. Positively regulates the light-inducible gene cluster in the megaplasmid in a cAMP-independent manner. In Thermus thermophilus (strain ATCC 27634 / DSM 579 / HB8), this protein is Transcriptional regulator LdrP.